A 488-amino-acid chain; its full sequence is ATP synthase subunit beta (488 aa).

164–171 (GGAGVGKT) lines the ATP pocket.

This sequence belongs to the ATPase alpha/beta chains family. In terms of assembly, F-type ATPases have 2 components, CF(1) - the catalytic core - and CF(0) - the membrane proton channel. CF(1) has five subunits: alpha(3), beta(3), gamma(1), delta(1), epsilon(1). CF(0) has four main subunits: a(1), b(1), b'(1) and c(9-12).

It is found in the cellular thylakoid membrane. It carries out the reaction ATP + H2O + 4 H(+)(in) = ADP + phosphate + 5 H(+)(out). Its function is as follows. Produces ATP from ADP in the presence of a proton gradient across the membrane. The catalytic sites are hosted primarily by the beta subunits. This is ATP synthase subunit beta from Prochlorococcus marinus (strain MIT 9211).